We begin with the raw amino-acid sequence, 187 residues long: Oligoribonuclease (187 aa).

The Exonuclease domain occupies 7–170; sequence LIWIDLEMTG…DDIKDSINEL (164 aa). Tyr128 is an active-site residue.

The protein belongs to the oligoribonuclease family.

It localises to the cytoplasm. 3'-to-5' exoribonuclease specific for small oligoribonucleotides. The polypeptide is Oligoribonuclease (Legionella pneumophila (strain Paris)).